We begin with the raw amino-acid sequence, 452 residues long: Flavanone 7-O-glucoside 2''-O-beta-L-rhamnosyltransferase (452 aa).

His-21 serves as the catalytic Proton acceptor. His-21 contacts an anthocyanidin. Asp-121 (charge relay) is an active-site residue. The chain crosses the membrane as a helical span at residues 136–156 (IAAILFLPLSAVACSFLLHNI). UDP-beta-L-rhamnose contacts are provided by Ser-268, Val-330, His-347, Gly-351, Ser-352, and Glu-355. Residues 407–436 (KHVVLQEEAKQIRRKANEISESMKKIGDAE) adopt a coiled-coil conformation.

This sequence belongs to the UDP-glycosyltransferase family. As to quaternary structure, monomer. In terms of tissue distribution, expressed in young fruits and leaves.

The protein localises to the membrane. It catalyses the reaction flavanone 7-O-beta-D-glucoside + UDP-beta-L-rhamnose = flavanone 7-O-[alpha-L-rhamnosyl-(1-&gt;2)-beta-D-glucoside] + UDP + H(+). Its function is as follows. Involved in the production of the bitter neohesperidosides in citrus. Shows a strict specificity for UDP-rhamnose as donor. This Citrus maxima (Pomelo) protein is Flavanone 7-O-glucoside 2''-O-beta-L-rhamnosyltransferase (C12RT1).